A 113-amino-acid polypeptide reads, in one-letter code: MSIEVRKSIFPSLPIIVFIVFVEVPVLSVIYPLIEVLTIYPLLISLIFSLAVFAYKFQKSEKNLKRLARQIMALFVIFWLLSQITMVVAVESEYHGIVSFRRDIYNAQLSCKG.

Transmembrane regions (helical) follow at residues 9–31, 36–58, and 71–90; these read IFPSLPIIVFIVFVEVPVLSVIY, VLTIYPLLISLIFSLAVFAYKFQ, and IMALFVIFWLLSQITMVVAV.

Its subcellular location is the cell membrane. This is an uncharacterized protein from Archaeoglobus fulgidus (strain ATCC 49558 / DSM 4304 / JCM 9628 / NBRC 100126 / VC-16).